Consider the following 99-residue polypeptide: NADH-quinone oxidoreductase subunit K (99 aa).

Helical transmembrane passes span 3 to 23, 28 to 48, and 59 to 79; these read LVNY…TVLV, IIMF…FVAF, and VVAF…LAII.

It belongs to the complex I subunit 4L family. In terms of assembly, NDH-1 is composed of 14 different subunits. Subunits NuoA, H, J, K, L, M, N constitute the membrane sector of the complex.

The protein localises to the cell membrane. The enzyme catalyses a quinone + NADH + 5 H(+)(in) = a quinol + NAD(+) + 4 H(+)(out). Functionally, NDH-1 shuttles electrons from NADH, via FMN and iron-sulfur (Fe-S) centers, to quinones in the respiratory chain. The immediate electron acceptor for the enzyme in this species is believed to be a menaquinone. Couples the redox reaction to proton translocation (for every two electrons transferred, four hydrogen ions are translocated across the cytoplasmic membrane), and thus conserves the redox energy in a proton gradient. The sequence is that of NADH-quinone oxidoreductase subunit K from Beutenbergia cavernae (strain ATCC BAA-8 / DSM 12333 / CCUG 43141 / JCM 11478 / NBRC 16432 / NCIMB 13614 / HKI 0122).